The following is a 484-amino-acid chain: Monocarboxylate transporter 2 (484 aa).

Residues 1–16 (MPSEPSAPLPQPLPPD) lie on the Cytoplasmic side of the membrane. Residues 17–37 (GGWGWVVVCASFISIGFSYAF) form a helical membrane-spanning segment. Residues 38 to 60 (PKAVTVFFKDIQEIFNTTSSQIA) lie on the Extracellular side of the membrane. The helical transmembrane segment at 61–81 (WISSIMLAVMYAGGPISSVLV) threads the bilayer. Residues 82–90 (NNYGSRPVV) are Cytoplasmic-facing. The chain crosses the membrane as a helical span at residues 91–111 (IVGGLLCCIGMILASYSNSVI). The Extracellular segment spans residues 112–116 (ELYLT). Residues 117–137 (VGFIGGLGLAFNLQPALTIIG) traverse the membrane as a helical segment. Residues 138–149 (KYFYRRRPLANG) are Cytoplasmic-facing. The chain crosses the membrane as a helical span at residues 150 to 170 (CAMAGSPVFLSTLAPFNQYLF). Residues 171–174 (NNYG) lie on the Extracellular side of the membrane. A helical membrane pass occupies residues 175-195 (WKGSFLILGGIFLHSCVAGCL). Residues 196–245 (MRPVGPSPNTKKSKSKVGSRHDSTLKKASKVSTAQKVNRFLDFSLFMHRG) lie on the Cytoplasmic side of the membrane. Residues 246–266 (FLIYLSGNVILFLGIFAPIIF) traverse the membrane as a helical segment. The Extracellular segment spans residues 267–281 (LAQYAKHIGVDDYNS). The helical transmembrane segment at 282 to 302 (AFLLSVMAFIDMFARPSVGLI) threads the bilayer. Topologically, residues 303–311 (ANTSLIRPR) are cytoplasmic. Residues 312-332 (IQYLFSSAIIFTGICHLLCPL) traverse the membrane as a helical segment. Topologically, residues 333 to 337 (ATTYS) are extracellular. The helical transmembrane segment at 338–358 (ALVVYVVFFGLGFGSISSLLF) threads the bilayer. Topologically, residues 359–372 (ECLMDIVGATRFSS) are cytoplasmic. The chain crosses the membrane as a helical span at residues 373-393 (AVGLTTIVECCPVLFGPPLAG). The Extracellular portion of the chain corresponds to 394–405 (KLLDITGEYKYL). The chain crosses the membrane as a helical span at residues 406–426 (YIASGTVVLVSGTYLLIGNAI). At 427–484 (NYRLLDKERKREKAKKKKSASHASREMEALNRSKQDEVTVKASNAHNPPSDRDKESNI) the chain is on the cytoplasmic side. The tract at residues 438–484 (EKAKKKKSASHASREMEALNRSKQDEVTVKASNAHNPPSDRDKESNI) is disordered. 2 stretches are compositionally biased toward basic and acidic residues: residues 449 to 465 (ASRE…DEVT) and 475 to 484 (PSDRDKESNI).

It belongs to the major facilitator superfamily. Monocarboxylate porter (TC 2.A.1.13) family. As to quaternary structure, homodimer. Interacts with GRID2IP. Interacts with EMB; interaction mediates SLC16A7 targeting to the plasma membrane. Interacts with isoform 2 of BSG. In terms of tissue distribution, detected in testis and in spermatozoa (at protein level).

Its subcellular location is the cell membrane. It localises to the cytoplasm. The protein resides in the basolateral cell membrane. It catalyses the reaction (S)-lactate(in) + H(+)(in) = (S)-lactate(out) + H(+)(out). It carries out the reaction 3-methyl-2-oxobutanoate(out) + H(+)(out) = 3-methyl-2-oxobutanoate(in) + H(+)(in). The enzyme catalyses acetoacetate(out) + H(+)(out) = acetoacetate(in) + H(+)(in). The catalysed reaction is (R)-3-hydroxybutanoate(out) + H(+)(out) = (R)-3-hydroxybutanoate(in) + H(+)(in). It catalyses the reaction 4-methyl-2-oxopentanoate(out) + H(+)(out) = 4-methyl-2-oxopentanoate(in) + H(+)(in). It carries out the reaction pyruvate(out) + H(+)(out) = pyruvate(in) + H(+)(in). The enzyme catalyses (S)-3-hydroxybutanoate(out) + H(+)(out) = (S)-3-hydroxybutanoate(in) + H(+)(in). Its activity is regulated as follows. Transport activity exhibits steep dependence on substrate concentration. Substrate concentration sensitivity of SLC16A7 arises from the strong inter-subunit cooperativity of the SLC16A7 dimer during transport. Inhibited by AR-C155858. Proton-coupled monocarboxylate symporter. Catalyzes the rapid transport across the plasma membrane of monocarboxylates such as L-lactate, pyruvate and ketone bodies, acetoacetate, beta-hydroxybutyrate and acetate. Dimerization is functionally required and both subunits work cooperatively in transporting substrate. In Mus musculus (Mouse), this protein is Monocarboxylate transporter 2 (Slc16a7).